A 215-amino-acid chain; its full sequence is 3-demethoxyubiquinol 3-hydroxylase (215 aa).

Fe cation is bound by residues Glu64, Glu94, His97, Glu146, Glu178, and His181.

The protein belongs to the COQ7 family. Fe cation is required as a cofactor.

It is found in the cell membrane. The enzyme catalyses a 5-methoxy-2-methyl-3-(all-trans-polyprenyl)benzene-1,4-diol + AH2 + O2 = a 3-demethylubiquinol + A + H2O. It participates in cofactor biosynthesis; ubiquinone biosynthesis. Catalyzes the hydroxylation of 2-nonaprenyl-3-methyl-6-methoxy-1,4-benzoquinol during ubiquinone biosynthesis. This Pseudomonas putida (strain GB-1) protein is 3-demethoxyubiquinol 3-hydroxylase.